A 287-amino-acid chain; its full sequence is ATP synthase gamma chain (287 aa).

Belongs to the ATPase gamma chain family. As to quaternary structure, F-type ATPases have 2 components, CF(1) - the catalytic core - and CF(0) - the membrane proton channel. CF(1) has five subunits: alpha(3), beta(3), gamma(1), delta(1), epsilon(1). CF(0) has three main subunits: a, b and c.

Its subcellular location is the cell inner membrane. Produces ATP from ADP in the presence of a proton gradient across the membrane. The gamma chain is believed to be important in regulating ATPase activity and the flow of protons through the CF(0) complex. This is ATP synthase gamma chain from Yersinia pestis.